The following is a 105-amino-acid chain: Large ribosomal subunit protein bL21 (105 aa).

Belongs to the bacterial ribosomal protein bL21 family. Part of the 50S ribosomal subunit. Contacts protein L20.

Its function is as follows. This protein binds to 23S rRNA in the presence of protein L20. This Frankia casuarinae (strain DSM 45818 / CECT 9043 / HFP020203 / CcI3) protein is Large ribosomal subunit protein bL21.